A 108-amino-acid chain; its full sequence is Cyclin-dependent protein kinase inhibitor SMR13 (108 aa).

Probable cyclin-dependent protein kinase (CDK) inhibitor that functions as a repressor of mitosis in the endoreduplication cell cycle. This is Cyclin-dependent protein kinase inhibitor SMR13 from Arabidopsis thaliana (Mouse-ear cress).